A 90-amino-acid polypeptide reads, in one-letter code: Small ribosomal subunit protein uS15c (90 aa).

It belongs to the universal ribosomal protein uS15 family. As to quaternary structure, part of the 30S ribosomal subunit.

The protein resides in the plastid. It is found in the chloroplast. This is Small ribosomal subunit protein uS15c (rps15-A) from Brachypodium distachyon (Purple false brome).